Consider the following 290-residue polypeptide: MLKRYLSITKPGIIFGNLISVAAGFFLAAKSEPASFLLLLTTLVGVGLVIASGCVVNNIFDRDIDQKMKRTQNRELVMGNINTDAAFVYALVLLLNGTALLFQVVNPLSAVVVLLGYVFYVFFYTMWYKRNSVYGTLVGSISGAVPPLVGYLAVTNYISLEATLLFVMFCLWQMPHSYAIAMFRMQDYRDAGIPVLPVKEGIAKAHQHMKAYVVAFGVVAIGLFMLGEAGYEYLAVSAAVCFMWTRVTFQKVDYNNYIQWSKSVFKMSLLVVMGISGVLGLELIPLPFIH.

Helical transmembrane passes span 8-28 (ITKP…FFLA), 36-56 (FLLL…GCVV), 85-105 (AAFV…FQVV), 108-128 (LSAV…TMWY), 131-151 (NSVY…LVGY), 152-172 (LAVT…FCLW), 211-231 (AYVV…EAGY), and 269-289 (LLVV…LPFI).

This sequence belongs to the UbiA prenyltransferase family. Protoheme IX farnesyltransferase subfamily.

The protein resides in the cell inner membrane. The catalysed reaction is heme b + (2E,6E)-farnesyl diphosphate + H2O = Fe(II)-heme o + diphosphate. It functions in the pathway porphyrin-containing compound metabolism; heme O biosynthesis; heme O from protoheme: step 1/1. Functionally, converts heme B (protoheme IX) to heme O by substitution of the vinyl group on carbon 2 of heme B porphyrin ring with a hydroxyethyl farnesyl side group. The polypeptide is Protoheme IX farnesyltransferase 1 (Vibrio campbellii (strain ATCC BAA-1116)).